The sequence spans 366 residues: Chorismate synthase (366 aa).

Positions 48 and 54 each coordinate NADP(+). Residues 125–127, 238–239, G278, 293–297, and R319 contribute to the FMN site; these read RSS, NA, and KPTSS.

It belongs to the chorismate synthase family. Homotetramer. It depends on FMNH2 as a cofactor.

It catalyses the reaction 5-O-(1-carboxyvinyl)-3-phosphoshikimate = chorismate + phosphate. It functions in the pathway metabolic intermediate biosynthesis; chorismate biosynthesis; chorismate from D-erythrose 4-phosphate and phosphoenolpyruvate: step 7/7. In terms of biological role, catalyzes the anti-1,4-elimination of the C-3 phosphate and the C-6 proR hydrogen from 5-enolpyruvylshikimate-3-phosphate (EPSP) to yield chorismate, which is the branch point compound that serves as the starting substrate for the three terminal pathways of aromatic amino acid biosynthesis. This reaction introduces a second double bond into the aromatic ring system. The protein is Chorismate synthase of Methylococcus capsulatus (strain ATCC 33009 / NCIMB 11132 / Bath).